Reading from the N-terminus, the 295-residue chain is MTIKTPTVKVPGLGTDPLEQRIKEKEKKWKYKIAVLSGKGGVGKSTVAVNLTAALAKMGYFVGILDADIHGPNVAKMLGVDKEEVYAEKFDDGHFEMIPPTTDFMGQVTPIKVMSMGMMVPEDQPVIWRGPLVTKAIKQLLGDVKWGSLDFMIIDFPPGTGDEILTVVQSIKLDAAIIVTTPQEVALLDTGKAVNMMKKMEVPYVAVVENMSYLICPHCGNKIDIFGEGGGEKLAQKEGVDFLGKIPIDLKAREASDLGIPIVLYEDTPAAKAFMELAEKLVNKLKEIKGDGGKE.

38–45 contacts ATP; sequence GKGGVGKS.

Belongs to the Mrp/NBP35 ATP-binding proteins family. As to quaternary structure, homodimer.

Its function is as follows. Binds and transfers iron-sulfur (Fe-S) clusters to target apoproteins. Can hydrolyze ATP. This chain is Iron-sulfur cluster carrier protein, found in Pyrococcus horikoshii (strain ATCC 700860 / DSM 12428 / JCM 9974 / NBRC 100139 / OT-3).